A 313-amino-acid chain; its full sequence is Potassium channel subfamily K member 6 (313 aa).

Residues 1–4 lie on the Cytoplasmic side of the membrane; the sequence is MRRG. The helical transmembrane segment at 5–25 threads the bilayer; that stretch reads ALLAGALAAYAAYLVLGALLV. N-linked (GlcNAc...) asparagine glycans are attached at residues Asn-79 and Asn-85. Residues 90 to 115 constitute an intramembrane region (pore-forming); it reads AWDFASALFFASTLITTVGYGYTTPL. Residues Thr-106, Val-107, Gly-108, and Tyr-109 each coordinate K(+). The selectivity filter 1 stretch occupies residues 106–111; that stretch reads TVGYGY. Residues 121–141 form a helical membrane-spanning segment; the sequence is AFSIAFALLGVPTTMLLLTAS. Topologically, residues 142 to 172 are cytoplasmic; that stretch reads AQRLSLLLTHVPLSWLSMRWGWDPRRAACWH. Residues 173 to 193 traverse the membrane as a helical segment; it reads LVALLGVVVTVCFLVPAVIFA. Positions 199–223 form an intramembrane region, pore-forming; the sequence is WSFLDAFYFCFISLSTIGLGDYVPG. Thr-214, Ile-215, and Gly-216 together coordinate K(+). Residues 214-219 form a selectivity filter 2 region; the sequence is TIGLGD. A helical membrane pass occupies residues 236 to 256; it reads VLVTVYLFLGLVAMVLVLQTF. Residues 257–313 are Cytoplasmic-facing; that stretch reads RHVSDLHGLTELILLPPPCPASFNADEDDRVDILGPQPESHQQLSASSHTDYASIPR. The Lysosomal targeting signal motif lies at 282–290; the sequence is DEDDRVDIL. The disordered stretch occupies residues 288–313; the sequence is DILGPQPESHQQLSASSHTDYASIPR. Polar residues predominate over residues 295–307; the sequence is ESHQQLSASSHTD. The short motif at 308 to 312 is the Lysosomal targeting signal element; sequence YASIP.

The protein belongs to the two pore domain potassium channel (TC 1.A.1.8) family. Homodimer; disulfide-linked. Post-translationally, N-glycosylation is necessary for targeting to lysosomes. In terms of tissue distribution, widespread expression, detected in all tissues tested except for skeletal muscle. Strongest expression in placenta, pancreas, heart, colon and spleen, lower levels detected in peripheral blood leukocytes, lung, liver, kidney and thymus. Lowest expression detected in brain.

Its subcellular location is the late endosome membrane. It localises to the lysosome membrane. The enzyme catalyses K(+)(in) = K(+)(out). K(+) channel that conducts outward rectifying currents at the membranes of the endolysosomal system. Active in lysosomes where it regulates lysosome numbers and size. In macrophages, enables K(+) efflux coupled to ATP-induced NLRP3 inflammasome activation upon bacterial infection. Cooperates with ATP-gated P2RX7 channels to activate NLRP3 inflammasome, with P2RX7 conducting Ca(2+) and Na(+) influx that sets the membrane potential for K(+) efflux. In terms of biological role, does not display channel activity. The protein is Potassium channel subfamily K member 6 of Homo sapiens (Human).